Here is a 149-residue protein sequence, read N- to C-terminus: Large ribosomal subunit protein uL13 (149 aa).

This sequence belongs to the universal ribosomal protein uL13 family. In terms of assembly, part of the 50S ribosomal subunit.

This protein is one of the early assembly proteins of the 50S ribosomal subunit, although it is not seen to bind rRNA by itself. It is important during the early stages of 50S assembly. The chain is Large ribosomal subunit protein uL13 from Chlorobium phaeobacteroides (strain DSM 266 / SMG 266 / 2430).